The following is a 746-amino-acid chain: Probably inactive copalyl diphosphate synthase 3 (746 aa).

A DXDD motif; degenerated motif is present at residues 331-334; that stretch reads DVND.

It belongs to the terpene synthase family. Tpsc subfamily. Mostly expressed in stems, and, at low levels, in roots and leaves, but barely in flowers.

This Isodon rubescens (Rabdosia rubescens) protein is Probably inactive copalyl diphosphate synthase 3.